Reading from the N-terminus, the 91-residue chain is Probable Fe(2+)-trafficking protein (91 aa).

This sequence belongs to the Fe(2+)-trafficking protein family.

Functionally, could be a mediator in iron transactions between iron acquisition and iron-requiring processes, such as synthesis and/or repair of Fe-S clusters in biosynthetic enzymes. In Burkholderia mallei (strain NCTC 10247), this protein is Probable Fe(2+)-trafficking protein.